An 810-amino-acid polypeptide reads, in one-letter code: Interleukin-4 receptor subunit alpha (810 aa).

The signal sequence occupies residues 1–25 (MGRLCTKFLTSVGCLILLLVTGSGS). At 26–233 (IKVLGEPTCF…NHFQLPLIQR (208 aa)) the chain is on the extracellular side. Cysteine 34 and cysteine 44 form a disulfide bridge. An N-linked (GlcNAc...) asparagine glycan is attached at asparagine 72. Cysteine 75 and cysteine 87 are oxidised to a cystine. The Fibronectin type-III domain occupies 126-224 (APDNLTLHTN…EWSPSITWYN (99 aa)). Residues asparagine 129, asparagine 135, and asparagine 163 are each glycosylated (N-linked (GlcNAc...) asparagine). Serine 165 carries the phosphoserine modification. Residues 213–217 (WSEWS) carry the WSXWS motif motif. A helical membrane pass occupies residues 234–257 (LPLGVTISCLCIPLFCLFCYFSIT). Over 258 to 810 (KIKKIWWDQI…PVGALGIAVS (553 aa)) the chain is Cytoplasmic. The Box 1 motif signature appears at 263–271 (WWDQIPTPA). The segment at 441-557 (GSGQASVSWA…ESWEQILHMS (117 aa)) is required for IRS1 activation and IL4-induced cell growth. The disordered stretch occupies residues 460-482 (ATCQVTEQPSHPGPLSGSPAQSA). Tyrosine 500 bears the Phosphotyrosine mark. The interval 510-546 (APNPGELAPEQQQADHLEEEEPPSPADPHSSGPPMQP) is disordered. Positions 557–653 (SVLQHGAAAG…SSVPLFTFGL (97 aa)) are required for IL4-induced gene expression. 3 positions are modified to phosphotyrosine: tyrosine 575, tyrosine 603, and tyrosine 631. The tract at residues 586–672 (AAQDPGVPGV…NSDPPKSPPE (87 aa)) is disordered. The segment covering 635 to 647 (QNPVPNQSPSSVP) has biased composition (low complexity). The short motif at 707–712 (IVYSSL) is the ITIM motif element. Residues 766 to 810 (PPEANLMSAPKTPSNLSGEGKGPGHSPVPSQTTEVPVGALGIAVS) form a disordered region.

The protein belongs to the type I cytokine receptor family. Type 4 subfamily. As to quaternary structure, the functional IL4 receptor is formed by initial binding of IL4 to IL4R. Subsequent recruitment to the complex of the common gamma chain, in immune cells, creates a type I receptor and, in non-immune cells, of IL13RA1 forms a type II receptor. IL4R can also interact with the IL13/IL13RA1 complex to form a similar type II receptor. Interacts with the SH2-containing phosphatases, PTPN6/SHIP1, PTPN11/SHIP2 and INPP5D/SHIP. Interacts with JAK3. Interacts with PIK3C3. Interacts with JAK1 through a Box 1-containing region; inhibited by SOCS5. Interacts with SOCS5; inhibits IL4 signaling. Interacts with CLM1. Interacts with IL13RA2. In terms of processing, on IL4 binding, phosphorylated on C-terminal tyrosine residues. Soluble IL4R can also be produced by proteolytic cleavage at the cell surface (shedding). In terms of tissue distribution, expressed in both Th1 and Th2 cells.

The protein resides in the cell membrane. It is found in the secreted. In terms of biological role, receptor for both interleukin 4 and interleukin 13. Couples to the JAK1/2/3-STAT6 pathway. The IL4 response is involved in promoting Th2 differentiation. The IL4/IL13 responses are involved in regulating IgE production and, chemokine and mucus production at sites of allergic inflammation. In certain cell types, can signal through activation of insulin receptor substrates, IRS1/IRS2. The polypeptide is Interleukin-4 receptor subunit alpha (Il4r) (Mus musculus (Mouse)).